Consider the following 380-residue polypeptide: 3-dehydroquinate synthase (380 aa).

Belongs to the archaeal-type DHQ synthase family.

The catalysed reaction is 2-amino-2,3,7-trideoxy-D-lyxo-hept-6-ulosonate + NAD(+) + H2O = 3-dehydroquinate + NH4(+) + NADH + H(+). Functionally, catalyzes the oxidative deamination and cyclization of 2-amino-3,7-dideoxy-D-threo-hept-6-ulosonic acid (ADH) to yield 3-dehydroquinate (DHQ), which is fed into the canonical shikimic pathway of aromatic amino acid biosynthesis. This chain is 3-dehydroquinate synthase, found in Methanosarcina barkeri (strain Fusaro / DSM 804).